An 804-amino-acid chain; its full sequence is Lon protease 2 (804 aa).

In terms of domain architecture, Lon N-terminal spans 6-199 (MPVCPVRGSV…AVLVLLEAEL (194 aa)). 362–369 (GPPGVGKT) lines the ATP pocket. The Lon proteolytic domain maps to 598 to 779 (EPQVGVATGM…DQVLDLALVG (182 aa)). Residues Ser685 and Lys728 contribute to the active site.

Belongs to the peptidase S16 family. Homohexamer. Organized in a ring with a central cavity.

The protein resides in the cytoplasm. It catalyses the reaction Hydrolysis of proteins in presence of ATP.. Functionally, ATP-dependent serine protease that mediates the selective degradation of mutant and abnormal proteins as well as certain short-lived regulatory proteins. Required for cellular homeostasis and for survival from DNA damage and developmental changes induced by stress. Degrades polypeptides processively to yield small peptide fragments that are 5 to 10 amino acids long. Binds to DNA in a double-stranded, site-specific manner. The sequence is that of Lon protease 2 from Thermus thermophilus (strain ATCC BAA-163 / DSM 7039 / HB27).